Here is a 245-residue protein sequence, read N- to C-terminus: Uridylate kinase (245 aa).

Residue 16–19 (KLSG) coordinates ATP. G58 is a UMP binding site. Residues G59 and R63 each contribute to the ATP site. UMP-binding positions include D78 and 139–146 (TGNPFFTT). Positions 166, 172, and 175 each coordinate ATP.

Belongs to the UMP kinase family. As to quaternary structure, homohexamer.

Its subcellular location is the cytoplasm. The catalysed reaction is UMP + ATP = UDP + ADP. It functions in the pathway pyrimidine metabolism; CTP biosynthesis via de novo pathway; UDP from UMP (UMPK route): step 1/1. Its activity is regulated as follows. Inhibited by UTP. In terms of biological role, catalyzes the reversible phosphorylation of UMP to UDP. The sequence is that of Uridylate kinase from Idiomarina loihiensis (strain ATCC BAA-735 / DSM 15497 / L2-TR).